Reading from the N-terminus, the 75-residue chain is Sec-independent protein translocase protein TatA (75 aa).

A helical membrane pass occupies residues 1 to 21 (MGSFSIWHWLIVLVIVLLVFG). The segment at 41 to 75 (KGMHDDDKPAGKLGDDSRSAEQAREAQAERDRDAR) is disordered.

Belongs to the TatA/E family. As to quaternary structure, the Tat system comprises two distinct complexes: a TatABC complex, containing multiple copies of TatA, TatB and TatC subunits, and a separate TatA complex, containing only TatA subunits. Substrates initially bind to the TatABC complex, which probably triggers association of the separate TatA complex to form the active translocon.

The protein resides in the cell inner membrane. Part of the twin-arginine translocation (Tat) system that transports large folded proteins containing a characteristic twin-arginine motif in their signal peptide across membranes. TatA could form the protein-conducting channel of the Tat system. This chain is Sec-independent protein translocase protein TatA, found in Xanthomonas campestris pv. campestris (strain 8004).